Reading from the N-terminus, the 527-residue chain is MLNNLLLFSLQISLIGTTLGGNVLIWPMEGSHWLNVKIIIDELIKKEHNVTVLVASGALFITPTSNPSLTFEIYKVPFGKERIEGVIKDFVLTWLENRPSPSTIWRFYQEMAKVIKDFHMVSQEICDGVLKNQQLMAKLKKSKFEVLVSDPVFPCGDIVALKLGIPFMYSLRFSPASTVEKHCGKVPYPPSYVPAVLSELTDQMSFTDRIRNFISYHLQDYMFETLWKSWDSYYSKALGGLLLCCPGWSAVADLGSLQPLLPGFKRFSRLSLHCSWDYRLPAGRPTTLCETMGKAEIWLIRTYWDFEFPRPYLPNFEFVGGLHCKPAKPLPKVLWRYKGKKPATLGNNTQLFDWIPQNDLLGHPKTKAFITHGGTNGIYEAIYHGVPMVGVPMFADQPDNIAHMKAKGAAVEVNLNTMTSVDLLSALRTVINEPSYKENAMRLSRIHHDQPVKPLDRAVFWIEFVMRHKGAKHLRVAAHDLTWFQYHSLDVIGFLLVCVTTAIFLVIQCCLFSCQKFGKIGKKKKRE.

The first 20 residues, 1-20 (MLNNLLLFSLQISLIGTTLG), serve as a signal peptide directing secretion. At 21–491 (GNVLIWPMEG…TWFQYHSLDV (471 aa)) the chain is on the lumenal side. N-linked (GlcNAc...) asparagine glycans are attached at residues Asn-49, Leu-313, and Asn-347. The helical transmembrane segment at 492–512 (IGFLLVCVTTAIFLVIQCCLF) threads the bilayer. The Cytoplasmic portion of the chain corresponds to 513 to 527 (SCQKFGKIGKKKKRE).

The protein belongs to the UDP-glycosyltransferase family. As to expression, olfactory epithelium, brain and fetal lung. Not present in liver.

The protein localises to the membrane. It is found in the endoplasmic reticulum membrane. It catalyses the reaction glucuronate acceptor + UDP-alpha-D-glucuronate = acceptor beta-D-glucuronoside + UDP + H(+). The catalysed reaction is 16beta,17beta-estriol + UDP-alpha-D-glucuronate = 16beta,17beta-estriol 16-O-(beta-D-glucuronate) + UDP + H(+). It carries out the reaction 16alpha,17alpha-estriol + UDP-alpha-D-glucuronate = 16alpha,17alpha-estriol 16-O-(beta-D-glucuronate) + UDP + H(+). The enzyme catalyses 17alpha-estradiol + UDP-alpha-D-glucuronate = 17alpha-estradiol 17-O-(beta-D-glucuronate) + UDP + H(+). It catalyses the reaction 17alpha-estradiol + UDP-alpha-D-glucuronate = 17alpha-estradiol 3-O-(beta-D-glucuronate) + UDP + H(+). The catalysed reaction is 17beta-estradiol + UDP-alpha-D-glucuronate = 17beta-estradiol 3-O-(beta-D-glucuronate) + UDP + H(+). It carries out the reaction 17beta-estradiol + UDP-alpha-D-glucuronate = 17beta-estradiol 17-O-(beta-D-glucuronate) + UDP + H(+). The enzyme catalyses testosterone + UDP-alpha-D-glucuronate = testosterone 17-O-(beta-D-glucuronate) + UDP + H(+). It catalyses the reaction epitestosterone + UDP-alpha-D-glucuronate = epitestosterone 17-O-(beta-D-glucuronate) + UDP + H(+). The catalysed reaction is lithocholate + UDP-alpha-D-glucuronate = lithocholoyl-3-O-(beta-D-glucuronate) + UDP + H(+). It carries out the reaction lithocholate + UDP-alpha-D-glucuronate = lithocholoyl-24-O-(beta-D-glucuronate) + UDP. The enzyme catalyses deoxycholate + UDP-alpha-D-glucuronate = deoxycholoyl-24-O-(beta-D-glucuronate) + UDP. It catalyses the reaction hyodeoxycholate + UDP-alpha-D-glucuronate = hyodeoxycholoyl-24-O-(beta-D-glucuronate) + UDP. The catalysed reaction is hyocholate + UDP-alpha-D-glucuronate = hyocholoyl-24-O-(beta-D-glucuronate) + UDP. UDP-glucuronosyltransferase (UGT) that catalyzes phase II biotransformation reactions in which lipophilic substrates are conjugated with glucuronic acid to increase the metabolite's water solubility, thereby facilitating excretion into either the urine or bile. Essential for the elimination and detoxification of drugs, xenobiotics and endogenous compounds. Catalyzes the glucuronidation of endogenous steroid hormones such as androgens (testosterone and epitestosterone) and estrogens (estradiol and epiestriol). Contributes to bile acid (BA) detoxification by catalyzing the glucuronidation of BA substrates, which are natural detergents for dietary lipids absorption. Shows a high affinity to aliphatic odorants such as citronellol as well as olfactory tissue specificity, and therefore may be involved in olfaction. Shows a potential role in detoxification of toxic waste compounds in the amniotic fluid before birth, and air-born chemical after birth. The sequence is that of UDP-glucuronosyltransferase 2A1 from Homo sapiens (Human).